A 65-amino-acid chain; its full sequence is Disintegrin CC5 (65 aa).

Positions 1–65 constitute a Disintegrin domain; it reads MNSAHPCCDP…SDCPRNRYKS (65 aa). 4 disulfide bridges follow: cysteine 7–cysteine 30, cysteine 21–cysteine 27, cysteine 26–cysteine 51, and cysteine 39–cysteine 58. The short motif at 43 to 45 is the Cell attachment site element; that stretch reads RGD.

Belongs to the disintegrin family. Dimeric disintegrin subfamily. Homodimer; disulfide-linked. Expressed by the venom gland.

It is found in the secreted. Binds and inhibits integrins alpha-IIb/beta-3 (ITGA2B/ITGB3), alpha-V/beta-3 (ITGAV/ITGB3) and alpha-5/beta-1 (ITGA5/ITGB1). This Cerastes cerastes (Horned desert viper) protein is Disintegrin CC5.